Reading from the N-terminus, the 56-residue chain is MAVPQRRTSKTRKRMRRTHFKLEIPGMIKCDNCSEYKLAHRVCPSCGHYKGVKVAK.

The protein belongs to the bacterial ribosomal protein bL32 family.

In Brevibacillus brevis (strain 47 / JCM 6285 / NBRC 100599), this protein is Large ribosomal subunit protein bL32.